Consider the following 394-residue polypeptide: Small ribosomal subunit protein uS2m (394 aa).

The transit peptide at 1–25 (MQRHVFARNFRRLSLLRNPSLTKRF) directs the protein to the mitochondrion.

It belongs to the universal ribosomal protein uS2 family. As to quaternary structure, component of the mitochondrial small ribosomal subunit (mt-SSU). Mature yeast 74S mitochondrial ribosomes consist of a small (37S) and a large (54S) subunit. The 37S small subunit contains a 15S ribosomal RNA (15S mt-rRNA) and 34 different proteins. The 54S large subunit contains a 21S rRNA (21S mt-rRNA) and 46 different proteins.

The protein localises to the mitochondrion. Its function is as follows. Component of the mitochondrial ribosome (mitoribosome), a dedicated translation machinery responsible for the synthesis of mitochondrial genome-encoded proteins, including at least some of the essential transmembrane subunits of the mitochondrial respiratory chain. The mitoribosomes are attached to the mitochondrial inner membrane and translation products are cotranslationally integrated into the membrane. This is Small ribosomal subunit protein uS2m (MRP4) from Saccharomyces cerevisiae (strain ATCC 204508 / S288c) (Baker's yeast).